The chain runs to 197 residues: tRNA(Phe) 7-((3-amino-3-carboxypropyl)-4-demethylwyosine(37)-N(4))-methyltransferase (197 aa).

This sequence belongs to the TYW3 family.

The catalysed reaction is 4-demethyl-7-[(3S)-3-amino-3-carboxypropyl]wyosine(37) in tRNA(Phe) + S-adenosyl-L-methionine = 7-[(3S)-3-amino-3-carboxypropyl]wyosine(37) in tRNA(Phe) + S-adenosyl-L-homocysteine + H(+). Functionally, S-adenosyl-L-methionine-dependent methyltransferase that acts as a component of the wyosine derivatives biosynthesis pathway. Probably methylates N-4 position of wybutosine-86 to produce wybutosine-72. The polypeptide is tRNA(Phe) 7-((3-amino-3-carboxypropyl)-4-demethylwyosine(37)-N(4))-methyltransferase (Thermococcus sibiricus (strain DSM 12597 / MM 739)).